Reading from the N-terminus, the 229-residue chain is GTP:AMP phosphotransferase (229 aa).

10 to 15 contacts a ribonucleoside 5'-triphosphate; sequence GVGKGT. Residues 30–59 are NMP; the sequence is NVGNILRNEIKKESNIGKEVQNVVRSGNLV. Residues Arg-36, 57–59, Gly-87, 87–90, and Gln-94 contribute to the AMP site; these read NLV and GFPR. Residues 123–170 form an LID region; it reads GRRICNICDKNFNVSNIQQDSFDMPPILPSKDCIQCNGHTNLIKRKDD. An AMP-binding site is contributed by Arg-178.

This sequence belongs to the adenylate kinase family.

It localises to the mitochondrion. It carries out the reaction a ribonucleoside 5'-triphosphate + AMP = a ribonucleoside 5'-diphosphate + ADP. It catalyses the reaction GTP + AMP = GDP + ADP. Its activity is regulated as follows. Inhibited by the dinucleoside pentaphosphate compound P1,P5-di(guanosine-5') pentaphosphate (GP5A). Catalyzes the reversible transfer of the terminal phosphate group between GTP and AMP. Has very low activity with UTP, ITP, CTP and IMP and no activity with ATP, GMP, CMP and UMP in vitro. This chain is GTP:AMP phosphotransferase, found in Plasmodium falciparum (isolate 3D7).